The chain runs to 154 residues: Transcriptional repressor NrdR (154 aa).

The segment at Cys3–Cys34 is a zinc-finger region. The region spanning Pro49–Glu139 is the ATP-cone domain.

This sequence belongs to the NrdR family. Zn(2+) serves as cofactor.

Functionally, negatively regulates transcription of bacterial ribonucleotide reductase nrd genes and operons by binding to NrdR-boxes. This chain is Transcriptional repressor NrdR, found in Pseudomonas entomophila (strain L48).